The chain runs to 159 residues: Ribosomal RNA large subunit methyltransferase H (159 aa).

Residues Leu76, Gly108, and 127–132 (FSKMTL) contribute to the S-adenosyl-L-methionine site.

This sequence belongs to the RNA methyltransferase RlmH family. In terms of assembly, homodimer.

It localises to the cytoplasm. It catalyses the reaction pseudouridine(1915) in 23S rRNA + S-adenosyl-L-methionine = N(3)-methylpseudouridine(1915) in 23S rRNA + S-adenosyl-L-homocysteine + H(+). In terms of biological role, specifically methylates the pseudouridine at position 1915 (m3Psi1915) in 23S rRNA. The sequence is that of Ribosomal RNA large subunit methyltransferase H from Bacillus mycoides (strain KBAB4) (Bacillus weihenstephanensis).